A 133-amino-acid chain; its full sequence is Hemoglobin subunit alpha-2 (133 aa).

A Globin domain is found at 1-133 (NVKAVWEHVK…VKNVLTSRYR (133 aa)). Histidine 50 contacts O2. Position 79 (histidine 79) interacts with heme b.

This sequence belongs to the globin family. Minor hemoglobin is a heterotetramer of two alpha-2 chains and two beta-2 chains. As to expression, red blood cells.

Its function is as follows. Involved in oxygen transport from the lung to the various peripheral tissues. The sequence is that of Hemoglobin subunit alpha-2 from Pleurodeles waltl (Iberian ribbed newt).